We begin with the raw amino-acid sequence, 217 residues long: Uracil-DNA glycosylase (217 aa).

The active-site Proton acceptor is the Asp62.

This sequence belongs to the uracil-DNA glycosylase (UDG) superfamily. UNG family.

It localises to the cytoplasm. The catalysed reaction is Hydrolyzes single-stranded DNA or mismatched double-stranded DNA and polynucleotides, releasing free uracil.. In terms of biological role, excises uracil residues from the DNA which can arise as a result of misincorporation of dUMP residues by DNA polymerase or due to deamination of cytosine. The polypeptide is Uracil-DNA glycosylase (Streptococcus sanguinis (strain SK36)).